Reading from the N-terminus, the 235-residue chain is SMN complex subunit yip11/gem2 (235 aa).

Residues 1-34 (MPSKRKRNPLQYQTSGSLDEETNQRSAFPQIDNN) are disordered. Polar residues predominate over residues 24–34 (QRSAFPQIDNN). 2 positions are modified to phosphoserine: S117 and S118.

This sequence belongs to the gemin-2 family. In terms of assembly, part of the core SMN complex at least composed of smn1, yip11/gem2, gem6, gem7 and gem8. Interacts with smn1; the interaction is direct.

The protein localises to the nucleus. Its function is as follows. The SMN complex catalyzes the assembly of small nuclear ribonucleoproteins (snRNPs), the building blocks of the spliceosome, and thereby plays an important role in the splicing of cellular pre-mRNAs. Most spliceosomal snRNPs contain a common set of Sm proteins smb1, smd1, smd2, smd3, sme1, smf1 and smg1 that assemble in a heptameric protein ring on the Sm site of the small nuclear RNA to form the core snRNP. In the cytosol, the Sm proteins smd1, smd2, sme1, smf1 and smg1 (5Sm) are trapped in an inactive 6S pICln-Sm complex by the chaperone saf5. To complete assembly of core snRNPs, the SMN complex accepts 5Sm from saf5. Binding of snRNA inside 5Sm ultimately triggers eviction of the SMN complex, thereby allowing binding of smd3 and smb1 to complete assembly of the core snRNP. Within the SMN complex, yip11/gem2 constrains the conformation of 5Sm, thereby promoting 5Sm binding to snRNA containing the snRNP code (a nonameric Sm site and a 3'-adjacent stem-loop), thus preventing progression of assembly until a cognate substrate is bound. This is SMN complex subunit yip11/gem2 (yip11) from Schizosaccharomyces pombe (strain 972 / ATCC 24843) (Fission yeast).